Here is a 522-residue protein sequence, read N- to C-terminus: Zinc finger protein STOP1 homolog (522 aa).

Composition is skewed to polar residues over residues Met-1–Ser-12 and Met-19–Asp-40. Disordered regions lie at residues Met-1–Pro-43 and Cys-234–Asn-260. Over residues Met-244–Asn-260 the composition is skewed to basic and acidic residues. Residues His-282 to His-304 form a C2H2-type 1 zinc finger. The segment at Lys-390–His-421 adopts a C2H2-type 2; atypical zinc-finger fold.

The protein resides in the nucleus. Its function is as follows. Probable transcription factor that may be involved in aluminum tolerance. In Oryza sativa subsp. japonica (Rice), this protein is Zinc finger protein STOP1 homolog.